A 1057-amino-acid polypeptide reads, in one-letter code: Adenylate-forming reductase stbB (1057 aa).

The tract at residues 21 to 378 (STKRQPGAVC…FRLRTDMNFE (358 aa)) is adenylation (A) domain. Residues His-251, 344 to 345 (NF), Thr-349, and 423 to 426 (AVGR) contribute to the AMP site. Residues 564-651 (ETLEEDIKAL…QMAAAIKNPS (88 aa)) form the Carrier domain. Ser-600 carries the post-translational modification O-(pantetheine 4'-phosphoryl)serine. The interval 693-1025 (IVVVTGSSGS…SGAVILGTDV (333 aa)) is reductase (R) domain. NADP(+) is bound by residues 700–703 (SGSL), 783–785 (AAW), Tyr-858, and Lys-862.

Belongs to the adenylate-forming reductase family.

It carries out the reaction ilicicolinate B + AH2 + ATP = ilicicolin B + A + AMP + diphosphate. It functions in the pathway secondary metabolite biosynthesis; terpenoid biosynthesis. Nonribosomal peptide synthase-like protein; part of the cluster that mediates the biosynthesis of LL-Z1272-beta, also known as ilicicolin B, a prenylated aryl-aldehyde produced by several fungi and that serves as a key pathway intermediate for many fungal meroterpenoids. The first step in the pathway is performed by the non-reducing polyketide synthase stbA that produces orsellinic acid by condensing acetyl-CoA with 3 malonyl-CoA units. The prenyltransferase stbC then prenylates orsenilic acid into grifolic acid. Finally, grifolic acid is reduced to ilicicolin B by the NRPS-like protein stbB. This is Adenylate-forming reductase stbB from Stachybotrys bisbyi (Hyalostachybotrys bisbyi).